A 614-amino-acid chain; its full sequence is Dihydroxy-acid dehydratase 1 (614 aa).

Position 81 (Asp-81) interacts with Mg(2+). Position 122 (Cys-122) interacts with [2Fe-2S] cluster. Residues Asp-123 and Lys-124 each coordinate Mg(2+). Lys-124 carries the post-translational modification N6-carboxylysine. Cys-195 serves as a coordination point for [2Fe-2S] cluster. Position 491 (Glu-491) interacts with Mg(2+). The Proton acceptor role is filled by Ser-517.

Belongs to the IlvD/Edd family. As to quaternary structure, homodimer. Requires [2Fe-2S] cluster as cofactor. It depends on Mg(2+) as a cofactor.

It carries out the reaction (2R)-2,3-dihydroxy-3-methylbutanoate = 3-methyl-2-oxobutanoate + H2O. The catalysed reaction is (2R,3R)-2,3-dihydroxy-3-methylpentanoate = (S)-3-methyl-2-oxopentanoate + H2O. Its pathway is amino-acid biosynthesis; L-isoleucine biosynthesis; L-isoleucine from 2-oxobutanoate: step 3/4. It participates in amino-acid biosynthesis; L-valine biosynthesis; L-valine from pyruvate: step 3/4. Its function is as follows. Functions in the biosynthesis of branched-chain amino acids. Catalyzes the dehydration of (2R,3R)-2,3-dihydroxy-3-methylpentanoate (2,3-dihydroxy-3-methylvalerate) into 2-oxo-3-methylpentanoate (2-oxo-3-methylvalerate) and of (2R)-2,3-dihydroxy-3-methylbutanoate (2,3-dihydroxyisovalerate) into 2-oxo-3-methylbutanoate (2-oxoisovalerate), the penultimate precursor to L-isoleucine and L-valine, respectively. In Mesorhizobium japonicum (strain LMG 29417 / CECT 9101 / MAFF 303099) (Mesorhizobium loti (strain MAFF 303099)), this protein is Dihydroxy-acid dehydratase 1.